We begin with the raw amino-acid sequence, 829 residues long: pre-rRNA 2'-O-ribose RNA methyltransferase FTSJ3 (829 aa).

Residues Gly56, Trp58, Asp76, Asp92, and Asp117 each contribute to the S-adenosyl-L-methionine site. The active-site Proton acceptor is the Lys157. Positions 332–367 are disordered; sequence ISLSSEEEGDEEESAAETKQASEEEEEREEEEQLNR. Residues Ser333, Ser335, Ser336, Ser345, and Ser353 each carry the phosphoserine modification. Residues 336 to 346 show a composition bias toward acidic residues; the sequence is SEEEGDEEESA. Over residues 354-363 the composition is skewed to acidic residues; it reads EEEEEREEEE. Position 389 is a citrulline (Arg389). 2 disordered regions span residues 443 to 508 and 528 to 634; these read FLSD…PLLV and DGFS…GFEV. Residues 456-473 are compositionally biased toward acidic residues; the sequence is DAEDDDDTSLESDLDPEE. A phosphoserine mark is found at Ser531 and Ser544. Lys570 is covalently cross-linked (Glycyl lysine isopeptide (Lys-Gly) (interchain with G-Cter in SUMO2)). At Ser575 the chain carries Phosphoserine. Glycyl lysine isopeptide (Lys-Gly) (interchain with G-Cter in SUMO2) cross-links involve residues Lys626 and Lys642. Ser659 is modified (phosphoserine). A Glycyl lysine isopeptide (Lys-Gly) (interchain with G-Cter in SUMO2) cross-link involves residue Lys661. Ser671 carries the post-translational modification Phosphoserine. A Glycyl lysine isopeptide (Lys-Gly) (interchain with G-Cter in SUMO2) cross-link involves residue Lys693. A coiled-coil region spans residues 722 to 760; it reads IKKVAEAKARKKRRMLKKLEQTKKKAEAVVNTVDISERE. Arg766 is modified (citrulline). Residues 794-804 are compositionally biased toward basic residues; sequence VRRPAGVRGHF. Residues 794–829 form a disordered region; the sequence is VRRPAGVRGHFKVVDSRMKKDQRAQRKEQKRNHRRK. Over residues 805-820 the composition is skewed to basic and acidic residues; sequence KVVDSRMKKDQRAQRK.

This sequence belongs to the class I-like SAM-binding methyltransferase superfamily. RNA methyltransferase RlmE family. SPB1 subfamily. In terms of assembly, interacts with NIP7. Post-translationally, citrullinated by PADI4.

It is found in the nucleus. It localises to the nucleolus. It carries out the reaction a ribonucleotide in rRNA + S-adenosyl-L-methionine = a 2'-O-methylribonucleotide in rRNA + S-adenosyl-L-homocysteine + H(+). Functionally, RNA 2'-O-methyltransferase involved in the processing of the 34S pre-rRNA to 18S rRNA and in 40S ribosomal subunit formation. This Rattus norvegicus (Rat) protein is pre-rRNA 2'-O-ribose RNA methyltransferase FTSJ3 (Ftsj3).